An 89-amino-acid chain; its full sequence is uncharacterized protein (89 aa).

Residue Met-1 is a topological domain, cytoplasmic. Residues 2–22 (LFEIIYIVSSLFYIVSIIYTL) traverse the membrane as a helical segment. Residues 23 to 89 (MRIKHINTVA…ELKKSKLCEG (67 aa)) are Extracellular-facing.

Its subcellular location is the host membrane. This is an uncharacterized protein from Sulfolobus islandicus filamentous virus (isolate Iceland/Hveragerdi) (SIFV).